The following is a 67-amino-acid chain: MQVLVRDNNVDQALKALKKKMQREGVFREMKLRRNYEKPSERRAREKAEAVRRARKLERKRLEREGF.

This sequence belongs to the bacterial ribosomal protein bS21 family.

The protein is Small ribosomal subunit protein bS21 of Paramagnetospirillum magneticum (strain ATCC 700264 / AMB-1) (Magnetospirillum magneticum).